We begin with the raw amino-acid sequence, 468 residues long: Adenosylhomocysteinase (468 aa).

The substrate site is built by T57, D132, and E194. NAD(+) is bound at residue 195–197 (TTT). Residues K224 and D228 each contribute to the substrate site. NAD(+) contacts are provided by residues N229, 258 to 263 (GFGDVG), E281, N316, 337 to 339 (IGH), and N382.

Belongs to the adenosylhomocysteinase family. NAD(+) is required as a cofactor.

It localises to the cytoplasm. The catalysed reaction is S-adenosyl-L-homocysteine + H2O = L-homocysteine + adenosine. Its pathway is amino-acid biosynthesis; L-homocysteine biosynthesis; L-homocysteine from S-adenosyl-L-homocysteine: step 1/1. Functionally, may play a key role in the regulation of the intracellular concentration of adenosylhomocysteine. The sequence is that of Adenosylhomocysteinase from Methylobacterium sp. (strain 4-46).